The sequence spans 158 residues: Urease accessory protein UreE (158 aa).

The protein belongs to the UreE family.

The protein resides in the cytoplasm. In terms of biological role, involved in urease metallocenter assembly. Binds nickel. Probably functions as a nickel donor during metallocenter assembly. The polypeptide is Urease accessory protein UreE (Klebsiella pneumoniae subsp. pneumoniae (strain ATCC 700721 / MGH 78578)).